Consider the following 353-residue polypeptide: tRNA N6-adenosine threonylcarbamoyltransferase (353 aa).

His-109 and His-113 together coordinate Fe cation. Residues 136–140, Asp-169, Gly-182, Asp-186, and Asn-284 contribute to the substrate site; that span reads TVSGG. Asp-312 is a binding site for Fe cation.

The protein belongs to the KAE1 / TsaD family. It depends on Fe(2+) as a cofactor.

The protein resides in the cytoplasm. It catalyses the reaction L-threonylcarbamoyladenylate + adenosine(37) in tRNA = N(6)-L-threonylcarbamoyladenosine(37) in tRNA + AMP + H(+). Required for the formation of a threonylcarbamoyl group on adenosine at position 37 (t(6)A37) in tRNAs that read codons beginning with adenine. Is involved in the transfer of the threonylcarbamoyl moiety of threonylcarbamoyl-AMP (TC-AMP) to the N6 group of A37, together with TsaE and TsaB. TsaD likely plays a direct catalytic role in this reaction. This is tRNA N6-adenosine threonylcarbamoyltransferase from Chlorobium phaeobacteroides (strain DSM 266 / SMG 266 / 2430).